Here is a 554-residue protein sequence, read N- to C-terminus: MEPNKDDNVSLAATAQISAPPVLQDASSLPGFSAIPPVVPPSFPPPMAPIPMMPHPPVARPPTFRPPVSQNGGVKTSDSDSESDDEHIEISEESKQVRERQEKALQDLLVKRRAAAMAVPTNDKAVRDRLRRLGEPITLFGEQEMERRARLTQLLTRYDINGQLDKLVKDHEEDVTPKEEVDDEVLEYPFFTEGPKELREARIEIAKFSVKRAAVRIQRAKRRRDDPDEDMDAETKWALKHAKHMALDCSNFGDDRPLTGCSFSRDGKILATCSLSGVTKLWEMPQVTNTIAVLKDHKERATDVVFSPVDDCLATASADRTAKLWKTDGTLLQTFEGHLDRLARVAFHPSGKYLGTTSYDKTWRLWDINTGAELLLQEGHSRSVYGIAFQQDGALAASCGLDSLARVWDLRTGRSILVFQGHIKPVFSVNFSPNGYHLASGGEDNQCRIWDLRMRKSLYIIPAHANLVSQVKYEPQEGYFLATASYDMKVNIWSGRDFSLVKSLAGHESKVASLDITADSSCIATVSHDRTIKLWTSSGNDDEDEEKETMDIDL.

Over residues 48 to 65 the composition is skewed to pro residues; sequence APIPMMPHPPVARPPTFR. Residues 48–99 form a disordered region; that stretch reads APIPMMPHPPVARPPTFRPPVSQNGGVKTSDSDSESDDEHIEISEESKQVRE. Positions 88–99 are enriched in basic and acidic residues; it reads IEISEESKQVRE. 7 WD repeats span residues 253-292, 296-335, 337-376, 379-418, 421-460, 463-503, and 506-545; these read GDDR…NTIA, DHKE…LQTF, GHLD…ELLL, GHSR…SILV, GHIK…SLYI, AHAN…LVKS, and GHES…DEDE.

It localises to the nucleus speckle. Participates in pre-mRNA splicing. Part of the U4/U5/U6 tri-snRNP complex, one of the building blocks of the spliceosome. Essential for reproduction. In female gametophyte, is necessary for the egg cell and central cell fate determination and hence reproductive success. Involved in a mechanism that prevents accessory cells from adopting gametic cell fate. Modulates egg cell signaling center that regulates the development of all female gametophytic cells. In Arabidopsis thaliana (Mouse-ear cress), this protein is U4/U6 small nuclear ribonucleoprotein PRP4-like protein.